The primary structure comprises 752 residues: Phosphatidylinositol 4-phosphate 5-kinase 1 (752 aa).

MORN repeat units follow at residues 81-103, 104-126, 127-149, 150-172, 173-195, 196-218, and 219-241; these read YIGS…DGCM, YEGD…SGAT, YEGE…DGDT, YRGT…NGDF, YEGT…NGNQ, YTGE…NGNR, and YEGL…DGSS. The region spanning 349-748 is the PIPK domain; it reads SKGHKKYDLM…RFRDFISRIF (400 aa). Residues 708–729 are activation loop; it reads YDITKKIEHAYKSLQADPASIS.

In terms of processing, phosphorylation inactivates the enzyme. As to expression, expressed in the whole plant, preferentially in roots. Strongly expressed in meristematic tissues, namely procambial cell layers.

The catalysed reaction is a 1,2-diacyl-sn-glycero-3-phospho-(1D-myo-inositol 4-phosphate) + ATP = a 1,2-diacyl-sn-glycero-3-phospho-(1D-myo-inositol-4,5-bisphosphate) + ADP + H(+). In terms of biological role, catalyzes the synthesis of phosphatidylinositol 4,5-bisphosphate and phosphatidylinositol 3,4-bisphosphate. The polypeptide is Phosphatidylinositol 4-phosphate 5-kinase 1 (PIP5K1) (Arabidopsis thaliana (Mouse-ear cress)).